A 176-amino-acid polypeptide reads, in one-letter code: Sperm-egg fusion protein TMEM95 (176 aa).

Residues 1–16 form the signal peptide; sequence MWVLALGGAFLAVAKA. 4 disulfides stabilise this stretch: Cys17-Cys119, Cys20-Cys122, Cys106-Cys129, and Cys110-Cys135. Over 17–146 the chain is Extracellular; it reads CIFCRLQDHA…PDSHDLWDAR (130 aa). N-linked (GlcNAc...) asparagine glycosylation is found at Asn36 and Asn118. A helical membrane pass occupies residues 147-167; it reads ILLLCIFGIVLLSGVVSLQVE. Topologically, residues 168 to 176 are cytoplasmic; sequence YLNLQAKDL.

Belongs to the TMEM95 family. In terms of assembly, does not interact with sperm-egg fusion proteins IZUMO1 or IZUMO1R/JUNO. In terms of processing, N-glycosylated. In terms of tissue distribution, expressed exclusively in testis.

The protein localises to the cytoplasmic vesicle. It is found in the secretory vesicle. The protein resides in the acrosome membrane. Functionally, sperm protein required for fusion of sperm with the egg membrane during fertilization. This is Sperm-egg fusion protein TMEM95 from Mus musculus (Mouse).